A 196-amino-acid polypeptide reads, in one-letter code: MIGYLRGKIIEVMNDSALIDVSGVGYEIHASSNTLGDLQALLGNDIIVWIHTHVREDALQLFGFHDKEEKNLFLSLLKVNGVGPKMALSILSGGRPAQIHEMIEAGNAKALSGLPKVGKKTAEQIILTLKGKLVSIEEGGVVAKAKSVAHTQITSALLNLGYKSQLVDQFVSSLPADIAVEDGIRKGFQTLSGGLS.

The domain I stretch occupies residues 1–65 (MIGYLRGKII…EDALQLFGFH (65 aa)). The interval 66-140 (DKEEKNLFLS…GKLVSIEEGG (75 aa)) is domain II. Residues 140 to 144 (GVVAK) form a flexible linker region. The interval 145 to 196 (AKSVAHTQITSALLNLGYKSQLVDQFVSSLPADIAVEDGIRKGFQTLSGGLS) is domain III.

This sequence belongs to the RuvA family. Homotetramer. Forms an RuvA(8)-RuvB(12)-Holliday junction (HJ) complex. HJ DNA is sandwiched between 2 RuvA tetramers; dsDNA enters through RuvA and exits via RuvB. An RuvB hexamer assembles on each DNA strand where it exits the tetramer. Each RuvB hexamer is contacted by two RuvA subunits (via domain III) on 2 adjacent RuvB subunits; this complex drives branch migration. In the full resolvosome a probable DNA-RuvA(4)-RuvB(12)-RuvC(2) complex forms which resolves the HJ.

The protein localises to the cytoplasm. Its function is as follows. The RuvA-RuvB-RuvC complex processes Holliday junction (HJ) DNA during genetic recombination and DNA repair, while the RuvA-RuvB complex plays an important role in the rescue of blocked DNA replication forks via replication fork reversal (RFR). RuvA specifically binds to HJ cruciform DNA, conferring on it an open structure. The RuvB hexamer acts as an ATP-dependent pump, pulling dsDNA into and through the RuvAB complex. HJ branch migration allows RuvC to scan DNA until it finds its consensus sequence, where it cleaves and resolves the cruciform DNA. This is Holliday junction branch migration complex subunit RuvA from Bdellovibrio bacteriovorus (strain ATCC 15356 / DSM 50701 / NCIMB 9529 / HD100).